Here is a 72-residue protein sequence, read N- to C-terminus: Translation initiation factor IF-1 (72 aa).

The S1-like domain occupies 1–72 (MSKDDSIEFE…TKGRITYRMK (72 aa)).

The protein belongs to the IF-1 family. As to quaternary structure, component of the 30S ribosomal translation pre-initiation complex which assembles on the 30S ribosome in the order IF-2 and IF-3, IF-1 and N-formylmethionyl-tRNA(fMet); mRNA recruitment can occur at any time during PIC assembly.

It localises to the cytoplasm. One of the essential components for the initiation of protein synthesis. Stabilizes the binding of IF-2 and IF-3 on the 30S subunit to which N-formylmethionyl-tRNA(fMet) subsequently binds. Helps modulate mRNA selection, yielding the 30S pre-initiation complex (PIC). Upon addition of the 50S ribosomal subunit IF-1, IF-2 and IF-3 are released leaving the mature 70S translation initiation complex. The polypeptide is Translation initiation factor IF-1 (Xanthomonas euvesicatoria pv. vesicatoria (strain 85-10) (Xanthomonas campestris pv. vesicatoria)).